Here is a 144-residue protein sequence, read N- to C-terminus: Large ribosomal subunit protein uL11 (144 aa).

Belongs to the universal ribosomal protein uL11 family. As to quaternary structure, part of the ribosomal stalk of the 50S ribosomal subunit. Interacts with L10 and the large rRNA to form the base of the stalk. L10 forms an elongated spine to which L12 dimers bind in a sequential fashion forming a multimeric L10(L12)X complex. In terms of processing, one or more lysine residues are methylated.

In terms of biological role, forms part of the ribosomal stalk which helps the ribosome interact with GTP-bound translation factors. The chain is Large ribosomal subunit protein uL11 from Streptomyces griseus subsp. griseus (strain JCM 4626 / CBS 651.72 / NBRC 13350 / KCC S-0626 / ISP 5235).